The primary structure comprises 252 residues: TVP38/TMEM64 family membrane protein Mb1528c (252 aa).

Helical transmembrane passes span 32-52, 64-84, 88-108, 149-169, 177-197, and 209-229; these read IVGT…VPVP, LGAW…VPPF, AFTL…IAVV, WLAI…INYA, ILSF…AVVI, and LLIL…VYEI.

The protein belongs to the TVP38/TMEM64 family.

The protein resides in the cell membrane. The protein is TVP38/TMEM64 family membrane protein Mb1528c of Mycobacterium bovis (strain ATCC BAA-935 / AF2122/97).